A 252-amino-acid chain; its full sequence is 3-dehydroquinate dehydratase (252 aa).

Residues Ser21, Glu46–Arg48, and Arg82 each bind 3-dehydroquinate. The active-site Proton donor/acceptor is the His143. Residue Lys170 is the Schiff-base intermediate with substrate of the active site. 3-dehydroquinate-binding residues include Arg213, Ser232, and Gln236.

This sequence belongs to the type-I 3-dehydroquinase family. Homodimer.

The enzyme catalyses 3-dehydroquinate = 3-dehydroshikimate + H2O. Its pathway is metabolic intermediate biosynthesis; chorismate biosynthesis; chorismate from D-erythrose 4-phosphate and phosphoenolpyruvate: step 3/7. Its function is as follows. Involved in the third step of the chorismate pathway, which leads to the biosynthesis of aromatic amino acids. Catalyzes the cis-dehydration of 3-dehydroquinate (DHQ) and introduces the first double bond of the aromatic ring to yield 3-dehydroshikimate. This is 3-dehydroquinate dehydratase from Shigella boydii serotype 4 (strain Sb227).